The following is a 461-amino-acid chain: Argininosuccinate lyase (461 aa).

This sequence belongs to the lyase 1 family. Argininosuccinate lyase subfamily.

It localises to the cytoplasm. The enzyme catalyses 2-(N(omega)-L-arginino)succinate = fumarate + L-arginine. The protein operates within amino-acid biosynthesis; L-arginine biosynthesis; L-arginine from L-ornithine and carbamoyl phosphate: step 3/3. The protein is Argininosuccinate lyase of Bacillus subtilis (strain 168).